Consider the following 70-residue polypeptide: Beta-defensin 107 (70 aa).

The first 26 residues, methionine 1–threonine 26, serve as a signal peptide directing secretion. 2 disulfide bridges follow: cysteine 41–cysteine 55 and cysteine 45–cysteine 64.

It belongs to the beta-defensin family. As to expression, specifically expressed in testis.

The protein resides in the secreted. Functionally, has antibacterial activity. The protein is Beta-defensin 107 (DEFB107A) of Homo sapiens (Human).